Here is a 197-residue protein sequence, read N- to C-terminus: Lipoprotein signal peptidase (197 aa).

2 helical membrane-spanning segments follow: residues 73–93 (SNAI…YLMI) and 97–117 (TIGS…NLID). Residues aspartate 126 and aspartate 144 contribute to the active site. The helical transmembrane segment at 135–155 (YSFPVFNLADCFITIGVIILI) threads the bilayer.

This sequence belongs to the peptidase A8 family.

Its subcellular location is the cell inner membrane. The enzyme catalyses Release of signal peptides from bacterial membrane prolipoproteins. Hydrolyzes -Xaa-Yaa-Zaa-|-(S,diacylglyceryl)Cys-, in which Xaa is hydrophobic (preferably Leu), and Yaa (Ala or Ser) and Zaa (Gly or Ala) have small, neutral side chains.. The protein operates within protein modification; lipoprotein biosynthesis (signal peptide cleavage). In terms of biological role, this protein specifically catalyzes the removal of signal peptides from prolipoproteins. The chain is Lipoprotein signal peptidase from Rickettsia felis (strain ATCC VR-1525 / URRWXCal2) (Rickettsia azadi).